The chain runs to 268 residues: MKKRVRVPDLVRMKQQGEPIVALTAYDYTLARLVDAADVDLVLVGDSLGMVVQGHETTLPVTLDEMIYHTRAVARGCQRALVVLDMPFGSTQNGPERTFEQAARAMKESGAAAIKLEGGQAMAATVAYLTERAIPVIGHLGLTPQSVHAFGGFKIQGRDQAAAQRIADDALALQQAGAGAIILEGIPAALAQQVSQSLTIPTIGIGAGVGCDGQVLVIYDMLGLYGDLAPKFVKRYLDGVPVIGGAIGAYVQEVRNRQFPTPDHSFEK.

Asp-46 and Asp-85 together coordinate Mg(2+). 3-methyl-2-oxobutanoate contacts are provided by residues 46–47 (DS), Asp-85, and Lys-115. Residue Glu-117 coordinates Mg(2+). Glu-184 acts as the Proton acceptor in catalysis.

It belongs to the PanB family. In terms of assembly, homodecamer; pentamer of dimers. The cofactor is Mg(2+).

It localises to the cytoplasm. It carries out the reaction 3-methyl-2-oxobutanoate + (6R)-5,10-methylene-5,6,7,8-tetrahydrofolate + H2O = 2-dehydropantoate + (6S)-5,6,7,8-tetrahydrofolate. It functions in the pathway cofactor biosynthesis; (R)-pantothenate biosynthesis; (R)-pantoate from 3-methyl-2-oxobutanoate: step 1/2. Its function is as follows. Catalyzes the reversible reaction in which hydroxymethyl group from 5,10-methylenetetrahydrofolate is transferred onto alpha-ketoisovalerate to form ketopantoate. The sequence is that of 3-methyl-2-oxobutanoate hydroxymethyltransferase from Magnetococcus marinus (strain ATCC BAA-1437 / JCM 17883 / MC-1).